The following is a 210-amino-acid chain: Cytochrome c biogenesis ATP-binding export protein CcmA (210 aa).

Residues 4–208 enclose the ABC transporter domain; sequence VPTLSFSKLG…GAIPAQLLEL (205 aa). Position 39-46 (39-46) interacts with ATP; the sequence is GANGVGKT.

This sequence belongs to the ABC transporter superfamily. CcmA exporter (TC 3.A.1.107) family. The complex is composed of two ATP-binding proteins (CcmA) and two transmembrane proteins (CcmB).

The protein resides in the cell inner membrane. It catalyses the reaction heme b(in) + ATP + H2O = heme b(out) + ADP + phosphate + H(+). Part of the ABC transporter complex CcmAB involved in the biogenesis of c-type cytochromes; once thought to export heme, this seems not to be the case, but its exact role is uncertain. Responsible for energy coupling to the transport system. This Albidiferax ferrireducens (strain ATCC BAA-621 / DSM 15236 / T118) (Rhodoferax ferrireducens) protein is Cytochrome c biogenesis ATP-binding export protein CcmA.